The following is a 183-amino-acid chain: Ribonuclease H (183 aa).

Residues 2–151 (SQARFIAFSD…VDQLAQAAAR (150 aa)) enclose the RNase H type-1 domain. Residues Asp11, Glu57, Asp79, and Asp143 each contribute to the Mg(2+) site.

The protein belongs to the RNase H family. Monomer. Mg(2+) is required as a cofactor.

It localises to the cytoplasm. The catalysed reaction is Endonucleolytic cleavage to 5'-phosphomonoester.. Functionally, endonuclease that specifically degrades the RNA of RNA-DNA hybrids. The chain is Ribonuclease H from Anaeromyxobacter dehalogenans (strain 2CP-C).